Consider the following 83-residue polypeptide: Snake venom metalloproteinase BnP1 (83 aa).

A Peptidase M12B domain is found at 8–83 (SYIELAVVAD…NPQCIINQPI (76 aa)). Residues E11, C77, and N80 each contribute to the Ca(2+) site.

Belongs to the venom metalloproteinase (M12B) family. P-I subfamily. In terms of assembly, monomer. Requires Zn(2+) as cofactor. As to expression, expressed by the venom gland.

Its subcellular location is the secreted. Its activity is regulated as follows. Inhibited by EDTA. This protein is a zinc protease from snake venom that is devoid of significant myotoxic and hemorrhagic activities. It hydrolyzes the Aalpha-chain and more slowly the Bbeta-chain of fibrin and fibrinogen, without affecting the gamma-chains. It induces cell detachment and a apoptosis (anoikis) in endothelial cells. The sequence is that of Snake venom metalloproteinase BnP1 from Bothrops pauloensis (Neuwied's lancehead).